The sequence spans 305 residues: Oxidoreductase swnR (305 aa).

This sequence belongs to the NmrA-type oxidoreductase family. Isoflavone reductase subfamily.

The enzyme catalyses L-pipecolate + O2 = L-1-piperideine-6-carboxylate + H2O2 + H(+). Its pathway is mycotoxin biosynthesis. In terms of biological role, oxidoreductase; part of the gene cluster that mediates the biosynthesis of swainsonine (SW), a cytotoxic fungal alkaloid and a potential cancer therapy drug. Swainsonine production occurs via a multibranched pathway and is dispensable for fungal colonization of plants and infection of insect hosts. The first step of swainsonine biosynthesis is the production of the precursor pipecolic acid (PA) via conversion of L-lysine (Lys) to 1-piperideine-6-carboxylate (P6C) by the aminotransferase swnA, the latter being further reduced to PA by the reductase swnR. The PKS-NRPS hybrid synthetase swnK uptakes and condensates PA and malonyl-CoA with and without skipping of the ketoreductase (KR) domain in order to produce 3 intermediates, 1-oxoindolizidine, (1S)-1-hydroxyindolizin, and (1R)-1-hydroxyindolizine; with the transisomer (1S)-1-hydroxyindolizin being predominant. The terminal thioester reductase (TE) domain of swnK is involved in reduction of the thioester bond to release the intermediate aldehydes. The oxidoreductase swnN could contribute to the reduction of 1-oxoindolizidine to (1S)-1-hydroxyindolizin and (1R)-1-hydroxyindolizine, contributing to the major route of SW production. The dioxygenase swnH2 would be responsible for the oxidization of (1R)-1-hydroxyindolizine into (1R,2S)-1,2-dihydroxyindolizine and of (1S)-1-hydroxyindolizin to yield both (1R,2S)-1,2-dihydroxyindolizine and (1S,2S)-1,2-dihydroxyindolizine. The dioxygenase swnH1 then performs the conversion of the 1,2-dihydroxyindolizine epimers to SW. The chain is Oxidoreductase swnR from Arthroderma benhamiae (strain ATCC MYA-4681 / CBS 112371) (Trichophyton mentagrophytes).